The following is a 427-amino-acid chain: Large ribosomal subunit protein uL4 (427 aa).

Ala2 carries the N-acetylalanine modification. Position 14 is an N6-acetyllysine (Lys14). Arg97 is subject to Omega-N-methylarginine. Position 106 is an N6-acetyllysine (Lys106). Lys239 is covalently cross-linked (Glycyl lysine isopeptide (Lys-Gly) (interchain with G-Cter in SUMO2)). The residue at position 259 (Lys259) is an N6-acetyllysine. At Thr266 the chain carries Phosphothreonine. Residues Ser290 and Ser295 each carry the phosphoserine modification. Arg300 carries the citrulline modification. A Glycyl lysine isopeptide (Lys-Gly) (interchain with G-Cter in SUMO2) cross-link involves residue Lys327. An N6-acetyllysine mark is found at Lys333 and Lys353. N6-acetyllysine; alternate is present on Lys364. Lys364 participates in a covalent cross-link: Glycyl lysine isopeptide (Lys-Gly) (interchain with G-Cter in SUMO1); alternate. Residue Ser365 is modified to Phosphoserine. The disordered stretch occupies residues 369–427 (AAVAGKKPVVGKKGKKAAVGVKKQKKPLVGKKAAATKKPAPEKKPAEKKPTTEEKKPAA). Residues 377-397 (VVGKKGKKAAVGVKKQKKPLV) show a composition bias toward basic residues. Basic and acidic residues predominate over residues 407–427 (PAPEKKPAEKKPTTEEKKPAA).

It belongs to the universal ribosomal protein uL4 family. In terms of assembly, component of the large ribosomal subunit. May bind IPO9 with low affinity. Interacts with RBM3. Citrullinated by PADI4.

The protein resides in the cytoplasm. Its function is as follows. Component of the large ribosomal subunit. The ribosome is a large ribonucleoprotein complex responsible for the synthesis of proteins in the cell. The polypeptide is Large ribosomal subunit protein uL4 (RPL4) (Homo sapiens (Human)).